Reading from the N-terminus, the 454-residue chain is Isthmin-1 (454 aa).

The first 29 residues, 1-29, serve as a signal peptide directing secretion; that stretch reads MVRLAAELLLLLGLLLLTLHITVLRGSGA. 3 disordered regions span residues 29-93, 125-144, and 161-209; these read ASDR…PRSF, PDSEAEKDQHPENKPSWSLP, and TNSG…STDG. Positions 38–55 are enriched in polar residues; it reads GNNNLNLESDSTSETSFP. Positions 128-137 are enriched in basic and acidic residues; it reads EAEKDQHPEN. A TSP type-1 domain is found at 208–252; sequence DGEGDWSLWSVCSVTCGNGNQKRTRSCGYACIATESRTCDRPNCP. 3 disulfide bridges follow: Cys219-Cys246, Cys223-Cys251, and Cys234-Cys238. The region spanning 279–442 is the AMOP domain; it reads LFEVDMDSCE…QKCTESPSDE (164 aa).

Belongs to the isthmin family. Interacts with integrin ITGAV/ITGB5.

The protein localises to the secreted. In terms of biological role, acts as an angiogenesis inhibitor. This is Isthmin-1 (Ism1) from Mus musculus (Mouse).